The following is a 525-amino-acid chain: Bifunctional purine biosynthesis protein PurH (525 aa).

The MGS-like domain occupies 10-156; it reads HRIPIRRALV…KNHPSVAIVT (147 aa).

The protein belongs to the PurH family.

It carries out the reaction (6R)-10-formyltetrahydrofolate + 5-amino-1-(5-phospho-beta-D-ribosyl)imidazole-4-carboxamide = 5-formamido-1-(5-phospho-D-ribosyl)imidazole-4-carboxamide + (6S)-5,6,7,8-tetrahydrofolate. It catalyses the reaction IMP + H2O = 5-formamido-1-(5-phospho-D-ribosyl)imidazole-4-carboxamide. It participates in purine metabolism; IMP biosynthesis via de novo pathway; 5-formamido-1-(5-phospho-D-ribosyl)imidazole-4-carboxamide from 5-amino-1-(5-phospho-D-ribosyl)imidazole-4-carboxamide (10-formyl THF route): step 1/1. It functions in the pathway purine metabolism; IMP biosynthesis via de novo pathway; IMP from 5-formamido-1-(5-phospho-D-ribosyl)imidazole-4-carboxamide: step 1/1. The sequence is that of Bifunctional purine biosynthesis protein PurH from Nocardioides sp. (strain ATCC BAA-499 / JS614).